The chain runs to 291 residues: 4-hydroxy-tetrahydrodipicolinate synthase (291 aa).

Thr44 contacts pyruvate. The active-site Proton donor/acceptor is Tyr132. The active-site Schiff-base intermediate with substrate is Lys160. Residue Ile202 participates in pyruvate binding.

Belongs to the DapA family. As to quaternary structure, homotetramer; dimer of dimers.

It is found in the cytoplasm. It carries out the reaction L-aspartate 4-semialdehyde + pyruvate = (2S,4S)-4-hydroxy-2,3,4,5-tetrahydrodipicolinate + H2O + H(+). The protein operates within amino-acid biosynthesis; L-lysine biosynthesis via DAP pathway; (S)-tetrahydrodipicolinate from L-aspartate: step 3/4. Functionally, catalyzes the condensation of (S)-aspartate-beta-semialdehyde [(S)-ASA] and pyruvate to 4-hydroxy-tetrahydrodipicolinate (HTPA). This is 4-hydroxy-tetrahydrodipicolinate synthase from Sphingopyxis alaskensis (strain DSM 13593 / LMG 18877 / RB2256) (Sphingomonas alaskensis).